The chain runs to 413 residues: Serine/threonine transporter SstT (413 aa).

Transmembrane regions (helical) follow at residues 19–39 (IFIGLILGLLVALVTPTLQNV), 61–81 (AVAPILIFVLVMAAIANKKIG), 89–109 (IIVLYLLGTFLAALSAVIAGF), 148–168 (ALFKANFVGVLAWSIGLGLAL), 189–209 (IVYVIIAFAPIGVFGLVSETL), 223–243 (LLAVLVGTMLFVAFVVNPILV), 297–317 (IPLGATINMAGAAITVTILTL), and 325–345 (IQISFFSALLLSVVASICACG).

This sequence belongs to the dicarboxylate/amino acid:cation symporter (DAACS) (TC 2.A.23) family.

Its subcellular location is the cell inner membrane. The catalysed reaction is L-serine(in) + Na(+)(in) = L-serine(out) + Na(+)(out). The enzyme catalyses L-threonine(in) + Na(+)(in) = L-threonine(out) + Na(+)(out). Involved in the import of serine and threonine into the cell, with the concomitant import of sodium (symport system). The sequence is that of Serine/threonine transporter SstT from Pasteurella multocida (strain Pm70).